The following is an 85-amino-acid chain: V-type proton ATPase subunit f (85 aa).

A run of 2 helical transmembrane segments spans residues 13–33 (CTGLSLIGIVFLLVLSYLFSI) and 56–76 (CLGAVVIYAVFFLFCGSQVIV).

In terms of assembly, V-ATPase is a heteromultimeric enzyme composed of a peripheral catalytic V1 complex (components A to H) attached to an integral membrane V0 proton pore complex (components: a, c, c', c'', d, e, f and VOA1).

Its subcellular location is the endoplasmic reticulum membrane. Accessory component of the V0 complex of vacuolar(H+)-ATPase (V-ATPase), a multisubunit enzyme composed of a peripheral complex (V1) that hydrolyzes ATP and a membrane integral complex (V0) that translocates protons. V-ATPase is responsible for acidifying and maintaining the pH of intracellular compartments. The chain is V-type proton ATPase subunit f from Schizosaccharomyces pombe (strain 972 / ATCC 24843) (Fission yeast).